Reading from the N-terminus, the 389-residue chain is Alkanesulfonate monooxygenase (389 aa).

The protein belongs to the SsuD family.

It carries out the reaction an alkanesulfonate + FMNH2 + O2 = an aldehyde + FMN + sulfite + H2O + 2 H(+). Catalyzes the desulfonation of aliphatic sulfonates. The chain is Alkanesulfonate monooxygenase from Agrobacterium fabrum (strain C58 / ATCC 33970) (Agrobacterium tumefaciens (strain C58)).